The primary structure comprises 306 residues: Large ribosomal subunit protein bL19m (306 aa).

Residues 34-43 show a composition bias toward basic and acidic residues; sequence ENQEEQKKEA. Residues 34-53 are disordered; it reads ENQEEQKKEAPPTTPTSPVN.

Belongs to the bacterial ribosomal protein bL19 family. Component of the mitochondrial ribosome large subunit (39S) which comprises a 16S rRNA and about 50 distinct proteins.

Its subcellular location is the mitochondrion. This is Large ribosomal subunit protein bL19m (mRpL19) from Drosophila melanogaster (Fruit fly).